The following is a 225-amino-acid chain: Putative 5'-nucleotidase alr3139 (225 aa).

A divalent metal cation-binding residues include aspartate 8, aspartate 9, serine 37, and asparagine 88.

Belongs to the SurE nucleotidase family. The cofactor is a divalent metal cation.

It is found in the cytoplasm. It carries out the reaction a ribonucleoside 5'-phosphate + H2O = a ribonucleoside + phosphate. Functionally, nucleotidase that shows phosphatase activity on nucleoside 5'-monophosphates. The protein is Putative 5'-nucleotidase alr3139 of Synechocystis sp. (strain ATCC 27184 / PCC 6803 / Kazusa).